A 27-amino-acid polypeptide reads, in one-letter code: Secretin (27 aa).

Leucine amide is present on Leu27.

Belongs to the glucagon family.

Its subcellular location is the secreted. Its function is as follows. Hormone involved in different processes, such as regulation of the pH of the duodenal content, food intake and water homeostasis. Exerts its biological effects by binding to secretin receptor (SCTR), a G-protein coupled receptor expressed in the basolateral domain of several cells. Acts as a key gastrointestinal hormone by regulating the pH of the duodenal content. Secreted by S cells of the duodenum in the crypts of Lieberkuehn and regulates the pH of the duodenum by (1) inhibiting the secretion of gastric acid from the parietal cells of the stomach and (2) stimulating the production of bicarbonate (NaHCO(3)) from the ductal cells of the pancreas. Production of bicarbonate is essential to neutralize the pH and ensure no damage is done to the small intestine by the gastric acid. In addition to regulating the pH of the duodenal content, plays a central role in diet induced thermogenesis: acts as a non-sympathetic brown fat (BAT) activator mediating prandial thermogenesis, which consequentially induces satiation. Mechanistically, secretin released by the gut after a meal binds to secretin receptor (SCTR) in brown adipocytes, activating brown fat thermogenesis by stimulating lipolysis, which is sensed in the brain and promotes satiation. Also able to stimulate lipolysis in white adipocytes. Also plays an important role in cellular osmoregulation: released into the systemic circulation in response to hyperosmolality and acts at different levels in the hypothalamus, pituitary and kidney to regulate water homeostasis. Also plays a role in the central nervous system, possibly by acting as a neuropeptide hormone: required for hippocampal synaptic function and neural progenitor cells maintenance. The protein is Secretin of Oryctolagus cuniculus (Rabbit).